A 187-amino-acid chain; its full sequence is Adenylate kinase (187 aa).

Residue 12–17 (GAGKGT) coordinates ATP. The tract at residues 32–61 (STGDIFRANLAENTELGQKARQFMDAGDLV) is NMP. Residues T33, R38, 59–61 (DLV), 87–90 (GYPR), and Q94 contribute to the AMP site. The LID stretch occupies residues 128-134 (GRGRADD). R129 provides a ligand contact to ATP. 2 residues coordinate AMP: R131 and R142. R170 is a binding site for ATP.

The protein belongs to the adenylate kinase family. Monomer.

It localises to the cytoplasm. It catalyses the reaction AMP + ATP = 2 ADP. Its pathway is purine metabolism; AMP biosynthesis via salvage pathway; AMP from ADP: step 1/1. Its function is as follows. Catalyzes the reversible transfer of the terminal phosphate group between ATP and AMP. Plays an important role in cellular energy homeostasis and in adenine nucleotide metabolism. The protein is Adenylate kinase of Leuconostoc mesenteroides subsp. mesenteroides (strain ATCC 8293 / DSM 20343 / BCRC 11652 / CCM 1803 / JCM 6124 / NCDO 523 / NBRC 100496 / NCIMB 8023 / NCTC 12954 / NRRL B-1118 / 37Y).